The sequence spans 325 residues: Brain mitochondrial carrier protein 1 (325 aa).

6 helical membrane passes run 38–54 (GLNW…SIVA), 112–128 (LRQA…YQSL), 141–161 (LLIN…IANP), 199–215 (GVVP…GVEL), 240–256 (VSSF…SNPV), and 298–315 (GFWP…IFFI). Solcar repeat units lie at residues 42 to 131 (KPFV…LKRL), 139 to 224 (ETLL…TKKH), and 233 to 323 (DTIL…LKRL).

Belongs to the mitochondrial carrier (TC 2.A.29) family. In terms of assembly, homotetramer. In terms of tissue distribution, mainly expressed in brain. Some expression in testis and pituitary.

The protein resides in the mitochondrion inner membrane. It carries out the reaction sulfite(in) + sulfate(out) = sulfite(out) + sulfate(in). It catalyses the reaction thiosulfate(in) + sulfate(out) = thiosulfate(out) + sulfate(in). The catalysed reaction is sulfate(out) + phosphate(in) = sulfate(in) + phosphate(out). The enzyme catalyses oxalate(in) + sulfate(out) = oxalate(out) + sulfate(in). It carries out the reaction malonate(in) + sulfate(out) = malonate(out) + sulfate(in). It catalyses the reaction maleate(in) + sulfate(out) = maleate(out) + sulfate(in). The catalysed reaction is (S)-malate(in) + sulfate(out) = (S)-malate(out) + sulfate(in). The enzyme catalyses (3S)-citramalate(in) + sulfate(out) = (3S)-citramalate(out) + sulfate(in). It carries out the reaction (3R)-citramalate(in) + sulfate(out) = (3R)-citramalate(out) + sulfate(in). It catalyses the reaction sulfate(out) + succinate(in) = sulfate(in) + succinate(out). The catalysed reaction is (S,S)-tartrate(in) + sulfate(out) = (S,S)-tartrate(out) + sulfate(in). The enzyme catalyses (2R,3R)-tartrate(in) + sulfate(out) = (2R,3R)-tartrate(out) + sulfate(in). It carries out the reaction D-aspartate(in) + sulfate(out) = D-aspartate(out) + sulfate(in). It catalyses the reaction L-aspartate(in) + sulfate(out) = L-aspartate(out) + sulfate(in). The catalysed reaction is sulfate(in) = sulfate(out). The enzyme catalyses phosphate(in) = phosphate(out). It carries out the reaction (S)-malate(out) = (S)-malate(in). It catalyses the reaction citrate(in) = citrate(out). The catalysed reaction is L-aspartate(out) = L-aspartate(in). The enzyme catalyses L-glutamate(out) = L-glutamate(in). It carries out the reaction H(+)(in) = H(+)(out). It catalyses the reaction chloride(in) = chloride(out). With respect to regulation, increased activity at pH lower than 8.0. sulfate/sulfate exchange activity is inhibited strongly by pyridoxal 5'-phosphate, bathophenanthroline and the organic mercurials mersalyl, p-chloromercuribenzoate and HgCl2. Proton conductance is activated by cardiolipin and long-chain free fatty acids and inhibited by purine nucleotides ATP and ADP. Chloride ion transporter activity is inhibited by long-chain free fatty acids. In terms of biological role, transports inorganic anions (sulfate, sulfite, thiosulfate and phosphate) and, to a lesser extent, a variety of dicarboxylates (e.g. malonate, malate and citramalate) and, even more so, aspartate and glutamate and tricarboxylates. May catalyze the export of sulfite and thiosulfate (the hydrogen sulfide degradation products) from the mitochondria, thereby modulating the level of the hydrogen sulfide. Also can mediate a very low unidirectional transport of anions including sulfate, phosphate, (S)-malate, citrate, L-aspartate and L-glutamate. Maintains oxidative balance (through uncoupling activities) and ATP production (by modifying mitochondrial membrane potential). Is able to transport protons across lipid membranes. Also exhibits transmembrane chloride transport activity to a lesser extent. May modify mitochondrial respiratory efficiency and mitochondrial oxidant production. This chain is Brain mitochondrial carrier protein 1, found in Homo sapiens (Human).